The sequence spans 473 residues: Ribosomal RNA small subunit methyltransferase F (473 aa).

S-adenosyl-L-methionine-binding positions include alanine 124–lysine 130, glutamate 148, aspartate 175, and aspartate 193. The active-site Nucleophile is the cysteine 246.

Belongs to the class I-like SAM-binding methyltransferase superfamily. RsmB/NOP family.

Its subcellular location is the cytoplasm. The enzyme catalyses cytidine(1407) in 16S rRNA + S-adenosyl-L-methionine = 5-methylcytidine(1407) in 16S rRNA + S-adenosyl-L-homocysteine + H(+). Specifically methylates the cytosine at position 1407 (m5C1407) of 16S rRNA. In Aliivibrio salmonicida (strain LFI1238) (Vibrio salmonicida (strain LFI1238)), this protein is Ribosomal RNA small subunit methyltransferase F.